We begin with the raw amino-acid sequence, 448 residues long: D-inositol 3-phosphate glycosyltransferase (448 aa).

1D-myo-inositol 3-phosphate-binding positions include H35, D46–N51, K104, Y137, T161, and R181. G49 is a UDP-N-acetyl-alpha-D-glucosamine binding site. UDP-N-acetyl-alpha-D-glucosamine contacts are provided by R255, K260, and M321. Mg(2+)-binding residues include Y330, R331, and A333. 2 residues coordinate UDP-N-acetyl-alpha-D-glucosamine: E343 and E351. Mg(2+) is bound at residue T357.

Belongs to the glycosyltransferase group 1 family. MshA subfamily. In terms of assembly, homodimer.

It catalyses the reaction 1D-myo-inositol 3-phosphate + UDP-N-acetyl-alpha-D-glucosamine = 1D-myo-inositol 2-acetamido-2-deoxy-alpha-D-glucopyranoside 3-phosphate + UDP + H(+). In terms of biological role, catalyzes the transfer of a N-acetyl-glucosamine moiety to 1D-myo-inositol 3-phosphate to produce 1D-myo-inositol 2-acetamido-2-deoxy-glucopyranoside 3-phosphate in the mycothiol biosynthesis pathway. In Acidothermus cellulolyticus (strain ATCC 43068 / DSM 8971 / 11B), this protein is D-inositol 3-phosphate glycosyltransferase.